The following is a 615-amino-acid chain: DNA mismatch repair protein MutL (615 aa).

It belongs to the DNA mismatch repair MutL/HexB family.

In terms of biological role, this protein is involved in the repair of mismatches in DNA. It is required for dam-dependent methyl-directed DNA mismatch repair. May act as a 'molecular matchmaker', a protein that promotes the formation of a stable complex between two or more DNA-binding proteins in an ATP-dependent manner without itself being part of a final effector complex. This is DNA mismatch repair protein MutL from Histophilus somni (strain 2336) (Haemophilus somnus).